A 265-amino-acid polypeptide reads, in one-letter code: Bidirectional sugar transporter NEC1 (265 aa).

Over M1–D8 the chain is Extracellular. A helical membrane pass occupies residues L9 to V29. Residues F11–K97 enclose the MtN3/slv 1 domain. At P30 to Y44 the chain is on the cytoplasmic side. The chain crosses the membrane as a helical span at residues Q45–L65. Residues R66–L71 lie on the Extracellular side of the membrane. A helical transmembrane segment spans residues I72 to F92. Topologically, residues Y93–G103 are cytoplasmic. A helical membrane pass occupies residues W104–A124. At E125 to V130 the chain is on the extracellular side. Residues M131–I151 form a helical membrane-spanning segment. Positions I132–K216 constitute a MtN3/slv 2 domain. The Cytoplasmic segment spans residues M152–M164. Residues P165–F185 form a helical membrane-spanning segment. Over K186–Y190 the chain is Extracellular. A helical membrane pass occupies residues I191–V211. Residues Y212–K265 are Cytoplasmic-facing.

Belongs to the SWEET sugar transporter family. In terms of assembly, forms homooligomers and/or heterooligomers. In terms of tissue distribution, highly expressed in nectary tissue and weakly in the stamen, especially in stomium cells and in the upper part of the filaments.

The protein localises to the cell membrane. Mediates both low-affinity uptake and efflux of sugar across the plasma membrane. Promotes the formation of phloem bundles in mid-veins. Probably involved in the development of stomium cells that control anther opening time. Required for pollen viability. In Petunia hybrida (Petunia), this protein is Bidirectional sugar transporter NEC1 (NEC1).